The sequence spans 85 residues: Large ribosomal subunit protein bL31B (85 aa).

Belongs to the bacterial ribosomal protein bL31 family. Type B subfamily. Part of the 50S ribosomal subunit.

This Micrococcus luteus (strain ATCC 4698 / DSM 20030 / JCM 1464 / CCM 169 / CCUG 5858 / IAM 1056 / NBRC 3333 / NCIMB 9278 / NCTC 2665 / VKM Ac-2230) (Micrococcus lysodeikticus) protein is Large ribosomal subunit protein bL31B.